A 242-amino-acid polypeptide reads, in one-letter code: Dehydration-responsive element-binding protein 1J (242 aa).

The span at 20–29 (SSATTAATAT) shows a compositional bias: low complexity. The interval 20–44 (SSATTAATATGPASPKRPAGRTKFQ) is disordered. The AP2/ERF DNA-binding region spans 50-109 (VFRGVRRRGRAGRWVCEVRVPGSRGDRLWVGTFDTAEEAARAHDAAMLALCGASASLNFA). Residues 143-184 (FQRRGSTAATATATSGDAASTAPPSSSPVLSPNDDNASSAST) form a disordered region. The segment covering 148–184 (STAATATATSGDAASTAPPSSSPVLSPNDDNASSAST) has biased composition (low complexity).

Belongs to the AP2/ERF transcription factor family. ERF subfamily.

The protein resides in the nucleus. In terms of biological role, transcriptional activator that binds specifically to the DNA sequence 5'-[AG]CCGAC-3'. Binding to the C-repeat/DRE element mediates high salinity- and dehydration-inducible transcription. The chain is Dehydration-responsive element-binding protein 1J (DREB1J) from Oryza sativa subsp. japonica (Rice).